The chain runs to 199 residues: Ribonuclease HII (199 aa).

Residues 14–199 enclose the RNase H type-2 domain; sequence GLLAGVDEAG…SFAPVAEVLR (186 aa). A divalent metal cation-binding residues include Asp-20, Glu-21, and Asp-112.

The protein belongs to the RNase HII family. Mn(2+) serves as cofactor. It depends on Mg(2+) as a cofactor.

It is found in the cytoplasm. The enzyme catalyses Endonucleolytic cleavage to 5'-phosphomonoester.. In terms of biological role, endonuclease that specifically degrades the RNA of RNA-DNA hybrids. This is Ribonuclease HII from Polaromonas sp. (strain JS666 / ATCC BAA-500).